A 214-amino-acid chain; its full sequence is Phosphoenolpyruvate guanylyltransferase (214 aa).

Phosphoenolpyruvate is bound by residues threonine 139, glycine 155, and serine 158.

Belongs to the CofC family.

It carries out the reaction phosphoenolpyruvate + GTP + H(+) = enolpyruvoyl-2-diphospho-5'-guanosine + diphosphate. The protein operates within cofactor biosynthesis; coenzyme F420 biosynthesis. Guanylyltransferase that catalyzes the activation of phosphoenolpyruvate (PEP) as enolpyruvoyl-2-diphospho-5'-guanosine, via the condensation of PEP with GTP. It is involved in the biosynthesis of coenzyme F420, a hydride carrier cofactor. This is Phosphoenolpyruvate guanylyltransferase from Salinispora arenicola (strain CNS-205).